A 129-amino-acid chain; its full sequence is Large ribosomal subunit protein bL12 (129 aa).

Belongs to the bacterial ribosomal protein bL12 family. Homodimer. Part of the ribosomal stalk of the 50S ribosomal subunit. Forms a multimeric L10(L12)X complex, where L10 forms an elongated spine to which 2 to 4 L12 dimers bind in a sequential fashion. Binds GTP-bound translation factors.

Forms part of the ribosomal stalk which helps the ribosome interact with GTP-bound translation factors. Is thus essential for accurate translation. This chain is Large ribosomal subunit protein bL12, found in Protochlamydia amoebophila (strain UWE25).